Consider the following 113-residue polypeptide: Endoribonuclease SymE (113 aa).

In terms of domain architecture, SpoVT-AbrB spans 29–74 (SRYPDYSRIPAITLKGQWLEAAGFATGTAVVVKVMEGCIVLTAQPA).

Belongs to the SymE family.

Its subcellular location is the cytoplasm. Involved in the degradation and recycling of damaged RNA. It is itself a target for degradation by the ATP-dependent protease Lon. In Escherichia coli (strain ATCC 8739 / DSM 1576 / NBRC 3972 / NCIMB 8545 / WDCM 00012 / Crooks), this protein is Endoribonuclease SymE.